The primary structure comprises 203 residues: Protein-L-isoaspartate O-methyltransferase (203 aa).

Residue Ser50 is part of the active site.

This sequence belongs to the methyltransferase superfamily. L-isoaspartyl/D-aspartyl protein methyltransferase family.

The protein resides in the cytoplasm. It carries out the reaction [protein]-L-isoaspartate + S-adenosyl-L-methionine = [protein]-L-isoaspartate alpha-methyl ester + S-adenosyl-L-homocysteine. Catalyzes the methyl esterification of L-isoaspartyl residues in peptides and proteins that result from spontaneous decomposition of normal L-aspartyl and L-asparaginyl residues. It plays a role in the repair and/or degradation of damaged proteins. This is Protein-L-isoaspartate O-methyltransferase from Methanococcoides burtonii (strain DSM 6242 / NBRC 107633 / OCM 468 / ACE-M).